A 168-amino-acid polypeptide reads, in one-letter code: Nicotinamide-nucleotide adenylyltransferase (168 aa).

The protein belongs to the archaeal NMN adenylyltransferase family.

It localises to the cytoplasm. It catalyses the reaction beta-nicotinamide D-ribonucleotide + ATP + H(+) = diphosphate + NAD(+). It functions in the pathway cofactor biosynthesis; NAD(+) biosynthesis; NAD(+) from nicotinamide D-ribonucleotide: step 1/1. In Methanosphaerula palustris (strain ATCC BAA-1556 / DSM 19958 / E1-9c), this protein is Nicotinamide-nucleotide adenylyltransferase.